A 235-amino-acid polypeptide reads, in one-letter code: Segregation and condensation protein A (235 aa).

The protein belongs to the ScpA family. Component of a cohesin-like complex composed of ScpA, ScpB and the Smc homodimer, in which ScpA and ScpB bind to the head domain of Smc. The presence of the three proteins is required for the association of the complex with DNA.

It is found in the cytoplasm. Participates in chromosomal partition during cell division. May act via the formation of a condensin-like complex containing Smc and ScpB that pull DNA away from mid-cell into both cell halves. The chain is Segregation and condensation protein A from Streptococcus mutans serotype c (strain ATCC 700610 / UA159).